The chain runs to 665 residues: Methionine--tRNA ligase (665 aa).

Positions Tyr-12–Ser-22 match the 'HIGH' region motif. The 'KMSKS' region signature appears at Lys-308–Ser-312. Lys-311 contacts ATP. Residues Thr-562–Gly-665 form the tRNA-binding domain.

Belongs to the class-I aminoacyl-tRNA synthetase family. MetG type 2B subfamily. As to quaternary structure, homodimer.

Its subcellular location is the cytoplasm. It carries out the reaction tRNA(Met) + L-methionine + ATP = L-methionyl-tRNA(Met) + AMP + diphosphate. In terms of biological role, is required not only for elongation of protein synthesis but also for the initiation of all mRNA translation through initiator tRNA(fMet) aminoacylation. The protein is Methionine--tRNA ligase (metG) of Streptococcus pyogenes serotype M6 (strain ATCC BAA-946 / MGAS10394).